The sequence spans 85 residues: Putative membrane protein insertion efficiency factor (85 aa).

This sequence belongs to the UPF0161 family.

The protein resides in the cell inner membrane. Its function is as follows. Could be involved in insertion of integral membrane proteins into the membrane. In Escherichia coli O157:H7, this protein is Putative membrane protein insertion efficiency factor.